A 386-amino-acid chain; its full sequence is Formate-dependent phosphoribosylglycinamide formyltransferase (386 aa).

N(1)-(5-phospho-beta-D-ribosyl)glycinamide contacts are provided by residues 10-11 (EL) and E70. Residues R102, K143, 148–153 (SSGKGQ), 183–186 (EAFV), and E191 each bind ATP. An ATP-grasp domain is found at 107–298 (DLAAKELGLK…EFELHLRAIL (192 aa)). E256 and E268 together coordinate Mg(2+). N(1)-(5-phospho-beta-D-ribosyl)glycinamide-binding positions include D275, K346, and 353 to 354 (RR).

It belongs to the PurK/PurT family. In terms of assembly, homodimer.

It carries out the reaction N(1)-(5-phospho-beta-D-ribosyl)glycinamide + formate + ATP = N(2)-formyl-N(1)-(5-phospho-beta-D-ribosyl)glycinamide + ADP + phosphate + H(+). It functions in the pathway purine metabolism; IMP biosynthesis via de novo pathway; N(2)-formyl-N(1)-(5-phospho-D-ribosyl)glycinamide from N(1)-(5-phospho-D-ribosyl)glycinamide (formate route): step 1/1. Involved in the de novo purine biosynthesis. Catalyzes the transfer of formate to 5-phospho-ribosyl-glycinamide (GAR), producing 5-phospho-ribosyl-N-formylglycinamide (FGAR). Formate is provided by PurU via hydrolysis of 10-formyl-tetrahydrofolate. The sequence is that of Formate-dependent phosphoribosylglycinamide formyltransferase from Flavobacterium psychrophilum (strain ATCC 49511 / DSM 21280 / CIP 103535 / JIP02/86).